Here is a 258-residue protein sequence, read N- to C-terminus: NAD kinase (258 aa).

The active-site Proton acceptor is D44. NAD(+) contacts are provided by residues 44–45 (DG), 116–117 (NE), D146, A154, and 157–162 (TAYNLS).

Belongs to the NAD kinase family. A divalent metal cation serves as cofactor.

It is found in the cytoplasm. The catalysed reaction is NAD(+) + ATP = ADP + NADP(+) + H(+). Involved in the regulation of the intracellular balance of NAD and NADP, and is a key enzyme in the biosynthesis of NADP. Catalyzes specifically the phosphorylation on 2'-hydroxyl of the adenosine moiety of NAD to yield NADP. This Zymomonas mobilis subsp. mobilis (strain ATCC 31821 / ZM4 / CP4) protein is NAD kinase.